The chain runs to 429 residues: Nicotinate phosphoribosyltransferase (429 aa).

Residues tyrosine 15, phenylalanine 177, and threonine 229 each contribute to the nicotinate site. The residue at position 232 (histidine 232) is a Phosphohistidine; by autocatalysis. Arginine 294 is a binding site for nicotinate. Threonine 355 lines the 5-phospho-alpha-D-ribose 1-diphosphate pocket.

Belongs to the NAPRTase family. In terms of processing, transiently phosphorylated on a His residue during the reaction cycle. Phosphorylation strongly increases the affinity for substrates and increases the rate of nicotinate D-ribonucleotide production. Dephosphorylation regenerates the low-affinity form of the enzyme, leading to product release.

It is found in the cytoplasm. The protein localises to the nucleus. The enzyme catalyses nicotinate + 5-phospho-alpha-D-ribose 1-diphosphate + ATP + H2O = nicotinate beta-D-ribonucleotide + ADP + phosphate + diphosphate. It participates in cofactor biosynthesis; NAD(+) biosynthesis; nicotinate D-ribonucleotide from nicotinate: step 1/1. Functionally, catalyzes the first step in the biosynthesis of NAD from nicotinic acid, the ATP-dependent synthesis of beta-nicotinate D-ribonucleotide from nicotinate and 5-phospho-D-ribose 1-phosphate. Essential for growth under anaerobic conditions. The protein is Nicotinate phosphoribosyltransferase (NPT1) of Saccharomyces cerevisiae (strain ATCC 204508 / S288c) (Baker's yeast).